Consider the following 1453-residue polypeptide: Chromatin remodeling regulator CECR2 (1453 aa).

Positions 170-237 (VQGRSNGELS…DLQTRNGSRG (68 aa)) are disordered. Residues 197 to 209 (TGKRRGRPPKRKK) are compositionally biased toward basic residues. A compositionally biased stretch (basic and acidic residues) spans 210–222 (LQEEIISSEKQEE). The span at 223 to 234 (NSLTSDLQTRNG) shows a compositional bias: polar residues. Phosphoserine is present on Ser402. Residues 414–518 (FELDDDFTAM…RCFHRAMTKH (105 aa)) enclose the Bromo domain. Position 526 is a phosphothreonine (Thr526). Disordered stretches follow at residues 536 to 667 (EKRE…HPPF), 767 to 796 (HGTT…TLGH), 827 to 868 (GYMQ…GESM), 884 to 1020 (VCPP…DNSY), 1046 to 1072 (VVGE…LCPR), 1131 to 1308 (LASM…YLYG), 1331 to 1368 (MLQT…VATQ), and 1396 to 1453 (QTGT…LDQS). The residue at position 551 (Ser551) is a Phosphoserine. Polar residues predominate over residues 637–649 (GSLQGSDPTNLHG). The span at 655 to 664 (EAPPGEPLQH) shows a compositional bias: pro residues. Residues 887-905 (PGVPYHPRQPTPPQLPGPF) show a composition bias toward pro residues. Position 983 is a phosphoserine (Ser983). Basic and acidic residues predominate over residues 985–998 (QERETEDSQLKSDA). Residues 999-1020 (SDSADTYKTSKNKNTWPLDNSY) show a composition bias toward polar residues. Arg1166 and Arg1172 each carry asymmetric dimethylarginine. Composition is skewed to low complexity over residues 1173–1187 (YSYQ…HPYQ) and 1202–1211 (QRSLPSQRSP). The span at 1228-1250 (NVLSSLQGCETLNTALTSPTQMD) shows a compositional bias: polar residues. Residues 1265-1289 (GPEEEKMDESVERPESPKEFLDLDN) are compositionally biased toward basic and acidic residues. Ser1280 is modified (phosphoserine). 2 stretches are compositionally biased toward polar residues: residues 1291–1304 (NAAT…STSD) and 1331–1346 (MLQT…SASH). Residues 1352–1364 (YPSPVPAHPPPHP) are compositionally biased toward pro residues.

As to quaternary structure, component of the CERF-1 ISWI chromatin remodeling complex (also called the CECR2-containing remodeling factor (CERF) complex) at least composed of CECR2 and SMARCA1. Component of the CERF-5 ISWI chromatin remodeling complex at least composed of CECR2 and SMARCA5/SNF2H. LUZP1 is detected as part of the CERF-1 and CERF-5 complexes in embryonic stem (ES) cells where it is involved in complex stabilization but is not detected in the complexes in the testis. Interacts with CCAR2; CCAR2 may form part of the CERF-1 and/or CEF-5 ISWI chromatin remodeling complexes in ES cells. Interacts with acetylated lysine residues on histone H2A and H3 (in vitro). Interacts with LRPPRC.

Its subcellular location is the nucleus. Its function is as follows. Regulatory subunit of the ATP-dependent CERF-1 and CERF-5 ISWI chromatin remodeling complexes, which form ordered nucleosome arrays on chromatin and facilitate access to DNA during DNA-templated processes such as DNA replication, transcription, and repair. The complexes do not have the ability to slide mononucleosomes to the center of a DNA template. The CERF-1 ISWI chromatin remodeling complex has a lower ATP hydrolysis rate than the CERF-5 ISWI chromatin remodeling complex. Plays a role in various processes during development: required during embryogenesis for neural tube closure and inner ear development. In adults, required for spermatogenesis, via the formation of ISWI-type chromatin complexes. In histone-modifying complexes, CECR2 recognizes and binds acylated histones: binds histones that are acetylated and/or butyrylated. May also be involved through its interaction with LRPPRC in the integration of cytoskeletal network with vesicular trafficking, nucleocytosolic shuttling, transcription, chromosome remodeling and cytokinesis. This chain is Chromatin remodeling regulator CECR2, found in Mus musculus (Mouse).